The sequence spans 122 residues: Urease subunit beta (122 aa).

It belongs to the urease beta subunit family. In terms of assembly, heterotrimer of UreA (gamma), UreB (beta) and UreC (alpha) subunits. Three heterotrimers associate to form the active enzyme.

The protein localises to the cytoplasm. The enzyme catalyses urea + 2 H2O + H(+) = hydrogencarbonate + 2 NH4(+). Its pathway is nitrogen metabolism; urea degradation; CO(2) and NH(3) from urea (urease route): step 1/1. The sequence is that of Urease subunit beta from Acetivibrio thermocellus (strain ATCC 27405 / DSM 1237 / JCM 9322 / NBRC 103400 / NCIMB 10682 / NRRL B-4536 / VPI 7372) (Clostridium thermocellum).